The chain runs to 231 residues: Chromosome partition protein MukE (231 aa).

The segment at 211 to 231 is disordered; it reads SLLADEEEQDYNEQAELEGEA. Over residues 214–231 the composition is skewed to acidic residues; that stretch reads ADEEEQDYNEQAELEGEA.

This sequence belongs to the MukE family. In terms of assembly, interacts, and probably forms a ternary complex, with MukF and MukB. The complex formation is stimulated by calcium or magnesium.

It is found in the cytoplasm. Its subcellular location is the nucleoid. Functionally, involved in chromosome condensation, segregation and cell cycle progression. May participate in facilitating chromosome segregation by condensation DNA from both sides of a centrally located replisome during cell division. Probably acts via its interaction with MukB and MukF. This Vibrio vulnificus (strain CMCP6) protein is Chromosome partition protein MukE.